We begin with the raw amino-acid sequence, 177 residues long: Putative adenylate kinase (177 aa).

ATP-binding residues include G10, G12, K13, T14, and T15. The tract at residues 30–50 (NLRDYALEKGIGEMKENELEI) is NMP. Residues 99 to 109 (ERGYGREKLGE) are LID. Positions 100 and 138 each coordinate ATP.

The protein belongs to the adenylate kinase family. AK6 subfamily. In terms of assembly, interacts with uS11. Not a structural component of 40S pre-ribosomes, but transiently interacts with them by binding to uS11.

It catalyses the reaction AMP + ATP = 2 ADP. The enzyme catalyses ATP + H2O = ADP + phosphate + H(+). In terms of biological role, broad-specificity nucleoside monophosphate (NMP) kinase that catalyzes the reversible transfer of the terminal phosphate group between nucleoside triphosphates and monophosphates. Also has ATPase activity. Involved in the late maturation steps of the 30S ribosomal particles, specifically 16S rRNA maturation. While NMP activity is not required for ribosome maturation, ATPase activity is. Associates transiently with small ribosomal subunit protein uS11. ATP hydrolysis breaks the interaction with uS11. May temporarily remove uS11 from the ribosome to enable a conformational change of the ribosomal RNA that is needed for the final maturation step of the small ribosomal subunit. The polypeptide is Putative adenylate kinase (Thermococcus kodakarensis (strain ATCC BAA-918 / JCM 12380 / KOD1) (Pyrococcus kodakaraensis (strain KOD1))).